The primary structure comprises 404 residues: Tryptophan synthase beta chain (404 aa).

The residue at position 98 (Lys-98) is an N6-(pyridoxal phosphate)lysine.

The protein belongs to the TrpB family. In terms of assembly, tetramer of two alpha and two beta chains. Pyridoxal 5'-phosphate is required as a cofactor.

The enzyme catalyses (1S,2R)-1-C-(indol-3-yl)glycerol 3-phosphate + L-serine = D-glyceraldehyde 3-phosphate + L-tryptophan + H2O. Its pathway is amino-acid biosynthesis; L-tryptophan biosynthesis; L-tryptophan from chorismate: step 5/5. Its function is as follows. The beta subunit is responsible for the synthesis of L-tryptophan from indole and L-serine. This is Tryptophan synthase beta chain from Rhodopseudomonas palustris (strain BisA53).